Reading from the N-terminus, the 80-residue chain is Exodeoxyribonuclease 7 small subunit (80 aa).

This sequence belongs to the XseB family. As to quaternary structure, heterooligomer composed of large and small subunits.

Its subcellular location is the cytoplasm. It carries out the reaction Exonucleolytic cleavage in either 5'- to 3'- or 3'- to 5'-direction to yield nucleoside 5'-phosphates.. Functionally, bidirectionally degrades single-stranded DNA into large acid-insoluble oligonucleotides, which are then degraded further into small acid-soluble oligonucleotides. In Vibrio atlanticus (strain LGP32) (Vibrio splendidus (strain Mel32)), this protein is Exodeoxyribonuclease 7 small subunit.